Reading from the N-terminus, the 1576-residue chain is Calmodulin-regulated spectrin-associated protein 1 (1576 aa).

Residues 217-332 (ESPSHPKVRY…FIAELFWWFE (116 aa)) enclose the Calponin-homology (CH) domain. Disordered stretches follow at residues 415–447 (HPLL…TRAD), 549–572 (DLEL…RRPA), 595–653 (KEKH…LESD), and 811–852 (YETK…QNRD). The span at 428–439 (VKPEESLNHRDQ) shows a compositional bias: basic and acidic residues. Over residues 554-566 (SVSSRASSQMSTS) the composition is skewed to low complexity. Over residues 595-611 (KEKHMVPKSEEYGEGKQ) the composition is skewed to basic and acidic residues. Composition is skewed to polar residues over residues 613 to 626 (GFSS…NQSF) and 642 to 651 (RTFTPLSSLE). A compositionally biased stretch (low complexity) spans 813–824 (TKSSTSSSQKTT). Positions 840–852 (QRREQSPGRQNRD) are enriched in basic and acidic residues. Coiled-coil stretches lie at residues 857-889 (LASE…SARQ) and 992-1022 (DVNE…QQQE). Disordered stretches follow at residues 1108–1149 (LKSV…RLHN), 1178–1236 (SSRV…ISDD), and 1274–1422 (RLRK…DWEN). Low complexity predominate over residues 1116-1131 (SPSVPTEESPVEVVPE). Residues 1178–1189 (SSRVAGVSTSES) show a composition bias toward polar residues. Composition is skewed to basic and acidic residues over residues 1195–1204 (VPVDERHKSS), 1225–1236 (HPEKTKDIISDD), and 1274–1323 (RLRK…KQEQ). A coiled-coil region spans residues 1254 to 1315 (ELAKKRAAFL…KARRELIKQE (62 aa)). A compositionally biased stretch (basic residues) spans 1333–1346 (PKPKPKSKKTRPKS). The span at 1354–1366 (SDSGTKYSSTPDN) shows a compositional bias: polar residues. Residues 1367–1382 (LSSAQSGSSLSLASGA) show a composition bias toward low complexity. Over residues 1383 to 1394 (TTEAESVHSGGT) the composition is skewed to polar residues. In terms of domain architecture, CKK spans 1437 to 1571 (GPKLYKEPSS…QAKRPALPKK (135 aa)).

Belongs to the CAMSAP1 family.

Its subcellular location is the cytoplasm. It localises to the cytoskeleton. Key microtubule-organizing protein that specifically binds the minus-end of non-centrosomal microtubules and regulates their dynamics and organization. Specifically recognizes growing microtubule minus-ends and stabilizes microtubules. Acts on free microtubule minus-ends that are not capped by microtubule-nucleating proteins or other factors and protects microtubule minus-ends from depolymerization. In contrast to camsap2 and camsap3, tracks along the growing tips of minus-end microtubules without significantly affecting the polymerization rate: binds at the very tip of the microtubules minus-end and acts as a minus-end tracking protein (-TIP) that dissociates from microtubules after allowing tubulin incorporation. Through interaction with spectrin may regulate neurite outgrowth. This chain is Calmodulin-regulated spectrin-associated protein 1 (camsap1), found in Xenopus laevis (African clawed frog).